We begin with the raw amino-acid sequence, 278 residues long: Probable endonuclease 4 (278 aa).

Positions 66, 106, 140, 172, 175, 209, 222, 224, and 254 each coordinate Zn(2+).

This sequence belongs to the AP endonuclease 2 family. Zn(2+) is required as a cofactor.

The enzyme catalyses Endonucleolytic cleavage to 5'-phosphooligonucleotide end-products.. In terms of biological role, endonuclease IV plays a role in DNA repair. It cleaves phosphodiester bonds at apurinic or apyrimidinic (AP) sites, generating a 3'-hydroxyl group and a 5'-terminal sugar phosphate. This chain is Probable endonuclease 4, found in Haloquadratum walsbyi (strain DSM 16790 / HBSQ001).